The chain runs to 1023 residues: 2-oxoglutarate dehydrogenase complex component E1 (1023 aa).

Residues 1–40 constitute a mitochondrion transit peptide; it reads MFHLRTCAAKLRPLTASQTVKTFSQNRPAAARTFQQIRCY. Lys-74 is subject to N6-succinyllysine. Ser-100 is subject to Phosphoserine. The Ca(2+) site is built by His-143, Asp-156, and Asp-158. Residue Arg-312 participates in thiamine diphosphate binding. Lys-401 carries the N6-acetyllysine modification. Thiamine diphosphate is bound by residues Asp-411, Asn-444, and Ile-446. Residues Asp-411, Asn-444, and Ile-446 each contribute to the Mg(2+) site. A Glycyl lysine isopeptide (Lys-Gly) (interchain with G-Cter in ubiquitin) cross-link involves residue Lys-534. An N6-succinyllysine modification is found at Lys-564. A thiamine diphosphate-binding site is contributed by Gln-676. Residue Lys-970 is modified to N6-acetyllysine.

It belongs to the alpha-ketoglutarate dehydrogenase family. In terms of assembly, homodimer. The 2-oxoglutarate dehydrogenase complex is composed of OGDH (2-oxoglutarate dehydrogenase; E1), DLST (dihydrolipoamide succinyltransferase; E2), DLD (dihydrolipoamide dehydrogenase; E3), and the assembly factor KGD4. It contains multiple copies of the three enzymatic components (E1, E2 and E3). In the nucleus, the 2-oxoglutarate dehydrogenase complex associates with KAT2A. Interacts with ABHD11; this interaction maintains the functional lipoylation of the 2-oxoglutarate dehydrogenase complex. Requires thiamine diphosphate as cofactor. Mg(2+) is required as a cofactor.

The protein resides in the mitochondrion. The protein localises to the nucleus. The enzyme catalyses N(6)-[(R)-lipoyl]-L-lysyl-[protein] + 2-oxoglutarate + H(+) = N(6)-[(R)-S(8)-succinyldihydrolipoyl]-L-lysyl-[protein] + CO2. With respect to regulation, calcium ions and ADP stimulate, whereas ATP and NADH reduce catalytic activity. 2-oxoglutarate dehydrogenase (E1o) component of the 2-oxoglutarate dehydrogenase complex (OGDHC). Participates in the first step, rate limiting for the overall conversion of 2-oxoglutarate to succinyl-CoA and CO(2) catalyzed by the whole OGDHC. Catalyzes the irreversible decarboxylation of 2-oxoglutarate (alpha-ketoglutarate) via the thiamine diphosphate (ThDP) cofactor and subsequent transfer of the decarboxylated acyl intermediate on an oxidized dihydrolipoyl group that is covalently amidated to the E2 enzyme (dihydrolipoyllysine-residue succinyltransferase or DLST). Plays a key role in the Krebs (citric acid) cycle, which is a common pathway for oxidation of fuel molecules, including carbohydrates, fatty acids, and amino acids. Can catalyze the decarboxylation of 2-oxoadipate in vitro, but at a much lower rate than 2-oxoglutarate. Mainly active in the mitochondrion. A fraction of the 2-oxoglutarate dehydrogenase complex also localizes in the nucleus and is required for lysine succinylation of histones: associates with KAT2A on chromatin and provides succinyl-CoA to histone succinyltransferase KAT2A. This Homo sapiens (Human) protein is 2-oxoglutarate dehydrogenase complex component E1.